We begin with the raw amino-acid sequence, 346 residues long: Protein Spea_1705 (346 aa).

Cysteine 101 functions as the Proton acceptor in the catalytic mechanism. Residues glycine 102–histidine 103, aspartate 262, and glycine 267–threonine 268 contribute to the substrate site.

Belongs to the proline racemase family.

The enzyme catalyses trans-3-hydroxy-L-proline = 1-pyrroline-2-carboxylate + H2O. In terms of biological role, in vitro, catalyzes the dehydration of trans-3-hydroxy-L-proline (t3LHyp) to Delta(1)-pyrroline-2-carboxylate (Pyr2C), albeit with very low efficiency. The physiological substrate may be different. Displays neither trans-4-hydroxy-L-proline (t4LHyp) epimerase nor proline racemase activity. The protein is Protein Spea_1705 of Shewanella pealeana (strain ATCC 700345 / ANG-SQ1).